A 288-amino-acid polypeptide reads, in one-letter code: Bifunctional protein FolD (288 aa).

Residues 166–168 (GAS) and isoleucine 232 each bind NADP(+).

This sequence belongs to the tetrahydrofolate dehydrogenase/cyclohydrolase family. Homodimer.

The catalysed reaction is (6R)-5,10-methylene-5,6,7,8-tetrahydrofolate + NADP(+) = (6R)-5,10-methenyltetrahydrofolate + NADPH. It carries out the reaction (6R)-5,10-methenyltetrahydrofolate + H2O = (6R)-10-formyltetrahydrofolate + H(+). The protein operates within one-carbon metabolism; tetrahydrofolate interconversion. Functionally, catalyzes the oxidation of 5,10-methylenetetrahydrofolate to 5,10-methenyltetrahydrofolate and then the hydrolysis of 5,10-methenyltetrahydrofolate to 10-formyltetrahydrofolate. The sequence is that of Bifunctional protein FolD from Escherichia fergusonii (strain ATCC 35469 / DSM 13698 / CCUG 18766 / IAM 14443 / JCM 21226 / LMG 7866 / NBRC 102419 / NCTC 12128 / CDC 0568-73).